The primary structure comprises 214 residues: NADH-quinone oxidoreductase subunit C (214 aa).

The protein belongs to the complex I 30 kDa subunit family. In terms of assembly, NDH-1 is composed of 14 different subunits. Subunits NuoB, C, D, E, F, and G constitute the peripheral sector of the complex.

It is found in the cell inner membrane. The enzyme catalyses a quinone + NADH + 5 H(+)(in) = a quinol + NAD(+) + 4 H(+)(out). NDH-1 shuttles electrons from NADH, via FMN and iron-sulfur (Fe-S) centers, to quinones in the respiratory chain. The immediate electron acceptor for the enzyme in this species is believed to be ubiquinone. Couples the redox reaction to proton translocation (for every two electrons transferred, four hydrogen ions are translocated across the cytoplasmic membrane), and thus conserves the redox energy in a proton gradient. In Caulobacter sp. (strain K31), this protein is NADH-quinone oxidoreductase subunit C.